Here is a 156-residue protein sequence, read N- to C-terminus: Protein-export protein SecB (156 aa).

Belongs to the SecB family. In terms of assembly, homotetramer, a dimer of dimers. One homotetramer interacts with 1 SecA dimer.

It is found in the cytoplasm. Its function is as follows. One of the proteins required for the normal export of preproteins out of the cell cytoplasm. It is a molecular chaperone that binds to a subset of precursor proteins, maintaining them in a translocation-competent state. It also specifically binds to its receptor SecA. This chain is Protein-export protein SecB, found in Desulfotalea psychrophila (strain LSv54 / DSM 12343).